We begin with the raw amino-acid sequence, 478 residues long: MTLSFITRWCDELPETYTALSPTPLNKARLIWHNAELANTLSIPSSLFKNGAGVWGGETLLPGMSPLAQVYSGHQFGVWAGQLGDGRGILLGEQQLADGTTMDWHLKGAGLTPYSRMGDGRAVLRSTIRESLASEAMHYLGIPTTRALSIVTSDSPVYRETVEPGAMLMRVAPSHLRFGHFEHFYYRREPEKVRQLADFAIRHYWSHLADDEDKYRLWFSDVVARTASLIAQWQTVGFAHGVMNTDNMSLLGLTLDYGPFGFLDDYEPGFICNHSDHQGRYSFDNQPAVALWNLQRLAQTLSPFVAVDALNEALDSYQQVLLTHYGQRMRQKLGFMTEQKEDNALLNELFSLMARERSDYTRTFRMLSLTEQHSAASPLRDEFIDRAAFDDWFARYRRRLQQDEVSDSERQQLMQSVNPALVLRNWLAQRAIEAAEKGDMTELHRLHEALRNPFSDRDDDYVSRPPDWGKRLEVSCSS.

Residues glycine 84, glycine 86, arginine 87, lysine 107, aspartate 119, glycine 120, arginine 170, and arginine 177 each contribute to the ATP site. Residue aspartate 246 is the Proton acceptor of the active site. Mg(2+)-binding residues include asparagine 247 and aspartate 256. Residue aspartate 256 participates in ATP binding.

It belongs to the SELO family. Mg(2+) serves as cofactor. It depends on Mn(2+) as a cofactor.

It carries out the reaction L-seryl-[protein] + ATP = 3-O-(5'-adenylyl)-L-seryl-[protein] + diphosphate. The enzyme catalyses L-threonyl-[protein] + ATP = 3-O-(5'-adenylyl)-L-threonyl-[protein] + diphosphate. The catalysed reaction is L-tyrosyl-[protein] + ATP = O-(5'-adenylyl)-L-tyrosyl-[protein] + diphosphate. It catalyses the reaction L-histidyl-[protein] + UTP = N(tele)-(5'-uridylyl)-L-histidyl-[protein] + diphosphate. It carries out the reaction L-seryl-[protein] + UTP = O-(5'-uridylyl)-L-seryl-[protein] + diphosphate. The enzyme catalyses L-tyrosyl-[protein] + UTP = O-(5'-uridylyl)-L-tyrosyl-[protein] + diphosphate. Nucleotidyltransferase involved in the post-translational modification of proteins. It can catalyze the addition of adenosine monophosphate (AMP) or uridine monophosphate (UMP) to a protein, resulting in modifications known as AMPylation and UMPylation. In Escherichia coli O7:K1 (strain IAI39 / ExPEC), this protein is Protein nucleotidyltransferase YdiU.